A 249-amino-acid polypeptide reads, in one-letter code: MTTNDTYEATYAIPMHCENCVNDIKACLKNVPGINSLNFDIEQQIMSVESSVAPSTIINTLRNCGKDAIIRGAGKPNSSAVAILETFQKYTIDQKKDTAVRGLARIVQVGENKTLFDITVNGVPEAGNYHASIHEKGDVSKGVESTGKVWHKFDEPIECFNESDLGKNLYSGKTFLSAPLPTWQLIGRSFVISKSLNHPENEPSSVKDYSFLGVIARSAGVWENNKQVCACTGKTVWEERKDALANNIK.

The HMA domain maps to T6–I69. A Zn(2+)-binding site is contributed by H16. The Cu cation site is built by C17 and C20. The cysteines at positions 27 and 64 are disulfide-linked. Residues C229 and C231 each coordinate Cu cation.

This sequence belongs to the CCS1 family. Homodimer, and heterodimer with apo-SOD1. Zinc-binding at His-16 of CCS1 and 'Glu-43' of apo-SOD1 is required for this heterodimerization. Cu(2+) is required as a cofactor.

It localises to the cytoplasm. The protein resides in the mitochondrion intermembrane space. In terms of biological role, copper chaperone for apo superoxide dismutase 1 (SOD1). Binds copper ions and delivers them specifically to apo-SOD1. This is Superoxide dismutase 1 copper chaperone (CCS1) from Saccharomyces cerevisiae (strain ATCC 204508 / S288c) (Baker's yeast).